We begin with the raw amino-acid sequence, 383 residues long: N-acetyldiaminopimelate deacetylase (383 aa).

Aspartate 72 is a catalytic residue. Glutamate 131 acts as the Proton acceptor in catalysis.

This sequence belongs to the peptidase M20A family. N-acetyldiaminopimelate deacetylase subfamily.

The catalysed reaction is N-acetyl-(2S,6S)-2,6-diaminopimelate + H2O = (2S,6S)-2,6-diaminopimelate + acetate. It functions in the pathway amino-acid biosynthesis; L-lysine biosynthesis via DAP pathway; LL-2,6-diaminopimelate from (S)-tetrahydrodipicolinate (acetylase route): step 3/3. Catalyzes the conversion of N-acetyl-diaminopimelate to diaminopimelate and acetate. The chain is N-acetyldiaminopimelate deacetylase from Lacticaseibacillus paracasei (strain ATCC 334 / BCRC 17002 / CCUG 31169 / CIP 107868 / KCTC 3260 / NRRL B-441) (Lactobacillus paracasei).